The sequence spans 545 residues: T-complex protein 1 subunit alpha (545 aa).

Residue S2 is modified to N-acetylserine.

This sequence belongs to the TCP-1 chaperonin family. As to quaternary structure, heterooligomeric complex of about 850 to 900 kDa that forms two stacked rings, 12 to 16 nm in diameter.

Its subcellular location is the cytoplasm. In terms of biological role, molecular chaperone; assists the folding of proteins upon ATP hydrolysis. Known to play a role, in vitro, in the folding of actin and tubulin. The protein is T-complex protein 1 subunit alpha of Arabidopsis thaliana (Mouse-ear cress).